We begin with the raw amino-acid sequence, 1396 residues long: Major capsid protein (1396 aa).

The protein belongs to the herpesviridae major capsid protein family. In terms of assembly, homomultimer. Makes the hexons and eleven out of twelve pentons. Interacts with triplex proteins 1/TRX1 and 2/TRX2; adjacent capsomers are linked together in groups of three by triplexes, heterotrimeric complexes composed of one molecule of TRX1 and two molecules of TRX2. Interacts with scaffold protein; this interaction allows efficient MCP transport to the host nucleus. Interacts with capsid vertex component 2/CVC2. Interacts with the small capsomere-interacting protein/SCP.

It is found in the virion. The protein localises to the host nucleus. Functionally, self-assembles to form an icosahedral capsid with a T=16 symmetry, about 200 nm in diameter, and consisting of 150 hexons and 12 pentons (total of 162 capsomers). Hexons form the edges and faces of the capsid and are each composed of six MCP molecules. In contrast, one penton is found at each of the 12 vertices. Eleven of the pentons are MCP pentamers, while the last vertex is occupied by the portal complex. The capsid is surrounded by a layer of proteinaceous material designated the tegument which, in turn, is enclosed in an envelope of host cell-derived lipids containing virus-encoded glycoproteins. This chain is Major capsid protein, found in Varicella-zoster virus (strain Dumas) (HHV-3).